The chain runs to 156 residues: Putative pre-16S rRNA nuclease (156 aa).

It belongs to the YqgF nuclease family.

It localises to the cytoplasm. Functionally, could be a nuclease involved in processing of the 5'-end of pre-16S rRNA. In Streptomyces avermitilis (strain ATCC 31267 / DSM 46492 / JCM 5070 / NBRC 14893 / NCIMB 12804 / NRRL 8165 / MA-4680), this protein is Putative pre-16S rRNA nuclease.